Reading from the N-terminus, the 510-residue chain is UDP-N-acetylmuramyl-tripeptide synthetase (510 aa).

Serine 36 lines the UDP-N-acetyl-alpha-D-muramoyl-L-alanyl-D-glutamate pocket. Position 113–119 (113–119) interacts with ATP; sequence GTKGKTT. Residues 159–160, serine 186, and arginine 194 each bind UDP-N-acetyl-alpha-D-muramoyl-L-alanyl-D-glutamate; that span reads TT. Residue lysine 228 is modified to N6-carboxylysine.

Belongs to the MurCDEF family. MurE subfamily. In terms of processing, carboxylation is probably crucial for Mg(2+) binding and, consequently, for the gamma-phosphate positioning of ATP.

It localises to the cytoplasm. Its pathway is cell wall biogenesis; peptidoglycan biosynthesis. Catalyzes the addition of an amino acid to the nucleotide precursor UDP-N-acetylmuramoyl-L-alanyl-D-glutamate (UMAG) in the biosynthesis of bacterial cell-wall peptidoglycan. This chain is UDP-N-acetylmuramyl-tripeptide synthetase, found in Ligilactobacillus salivarius (strain UCC118) (Lactobacillus salivarius).